Consider the following 692-residue polypeptide: Elongation factor G (692 aa).

The tr-type G domain occupies 8–282; sequence ENTRNIGIMA…GVVDYLPSPL (275 aa). Residues 17 to 24, 81 to 85, and 135 to 138 each bind GTP; these read AHIDAGKT, DTPGH, and NKMD.

It belongs to the TRAFAC class translation factor GTPase superfamily. Classic translation factor GTPase family. EF-G/EF-2 subfamily.

It localises to the cytoplasm. Its function is as follows. Catalyzes the GTP-dependent ribosomal translocation step during translation elongation. During this step, the ribosome changes from the pre-translocational (PRE) to the post-translocational (POST) state as the newly formed A-site-bound peptidyl-tRNA and P-site-bound deacylated tRNA move to the P and E sites, respectively. Catalyzes the coordinated movement of the two tRNA molecules, the mRNA and conformational changes in the ribosome. This chain is Elongation factor G, found in Geobacillus thermodenitrificans (strain NG80-2).